Consider the following 292-residue polypeptide: Lipoyl synthase (292 aa).

[4Fe-4S] cluster contacts are provided by C34, C39, C45, C60, C64, C67, and S273. The region spanning 46 to 262 (WNKKHATVMI…KYVAYSKGFL (217 aa)) is the Radical SAM core domain.

This sequence belongs to the radical SAM superfamily. Lipoyl synthase family. It depends on [4Fe-4S] cluster as a cofactor.

Its subcellular location is the cytoplasm. It carries out the reaction [[Fe-S] cluster scaffold protein carrying a second [4Fe-4S](2+) cluster] + N(6)-octanoyl-L-lysyl-[protein] + 2 oxidized [2Fe-2S]-[ferredoxin] + 2 S-adenosyl-L-methionine + 4 H(+) = [[Fe-S] cluster scaffold protein] + N(6)-[(R)-dihydrolipoyl]-L-lysyl-[protein] + 4 Fe(3+) + 2 hydrogen sulfide + 2 5'-deoxyadenosine + 2 L-methionine + 2 reduced [2Fe-2S]-[ferredoxin]. The protein operates within protein modification; protein lipoylation via endogenous pathway; protein N(6)-(lipoyl)lysine from octanoyl-[acyl-carrier-protein]: step 2/2. Catalyzes the radical-mediated insertion of two sulfur atoms into the C-6 and C-8 positions of the octanoyl moiety bound to the lipoyl domains of lipoate-dependent enzymes, thereby converting the octanoylated domains into lipoylated derivatives. The chain is Lipoyl synthase from Ehrlichia ruminantium (strain Welgevonden).